The sequence spans 315 residues: tRNA pseudouridine synthase B (315 aa).

Residue histidine 42 participates in substrate binding. Aspartate 47 functions as the Nucleophile in the catalytic mechanism. Substrate-binding residues include tyrosine 75, tyrosine 178, and leucine 199.

It belongs to the pseudouridine synthase TruB family. Type 1 subfamily.

The catalysed reaction is uridine(55) in tRNA = pseudouridine(55) in tRNA. Responsible for synthesis of pseudouridine from uracil-55 in the psi GC loop of transfer RNAs. The chain is tRNA pseudouridine synthase B from Photorhabdus laumondii subsp. laumondii (strain DSM 15139 / CIP 105565 / TT01) (Photorhabdus luminescens subsp. laumondii).